A 340-amino-acid chain; its full sequence is Ketol-acid reductoisomerase (NADP(+)) (340 aa).

The KARI N-terminal Rossmann domain maps to 1 to 183; the sequence is MAITVYYDKD…GGGRTGIIET (183 aa). NADP(+) is bound by residues 26 to 29, arginine 49, serine 52, serine 54, and 84 to 87; these read FGSQ and DEIQ. Histidine 109 is an active-site residue. Position 135 (glycine 135) interacts with NADP(+). The 146-residue stretch at 184–329 folds into the KARI C-terminal knotted domain; sequence TFKAETETDL…RNLRAMMPWI (146 aa). Mg(2+) is bound by residues aspartate 192, glutamate 196, glutamate 228, and glutamate 232. A substrate-binding site is contributed by serine 253.

It belongs to the ketol-acid reductoisomerase family. The cofactor is Mg(2+).

The catalysed reaction is (2R)-2,3-dihydroxy-3-methylbutanoate + NADP(+) = (2S)-2-acetolactate + NADPH + H(+). The enzyme catalyses (2R,3R)-2,3-dihydroxy-3-methylpentanoate + NADP(+) = (S)-2-ethyl-2-hydroxy-3-oxobutanoate + NADPH + H(+). The protein operates within amino-acid biosynthesis; L-isoleucine biosynthesis; L-isoleucine from 2-oxobutanoate: step 2/4. It participates in amino-acid biosynthesis; L-valine biosynthesis; L-valine from pyruvate: step 2/4. In terms of biological role, involved in the biosynthesis of branched-chain amino acids (BCAA). Catalyzes an alkyl-migration followed by a ketol-acid reduction of (S)-2-acetolactate (S2AL) to yield (R)-2,3-dihydroxy-isovalerate. In the isomerase reaction, S2AL is rearranged via a Mg-dependent methyl migration to produce 3-hydroxy-3-methyl-2-ketobutyrate (HMKB). In the reductase reaction, this 2-ketoacid undergoes a metal-dependent reduction by NADPH to yield (R)-2,3-dihydroxy-isovalerate. This is Ketol-acid reductoisomerase (NADP(+)) from Campylobacter jejuni subsp. jejuni serotype O:2 (strain ATCC 700819 / NCTC 11168).